We begin with the raw amino-acid sequence, 224 residues long: MKKIEAIAFDMYGTLYDVHSVVDACEKQYPGKGKDISVLWRQKQLEYAWLRCLMGQYIKFEEATANALTYTCNQMKLDCDEGSAMRLTEEYLRLKPFPEVRGALRALRQRGMRLAILSNGSTETIHDVVHNSGVEGEFEHLISVDSARAYKPHPLAYELGEEAFGISRESILFVSSNPWDVSGAKAFGYQVCWINRYGFAFDELGQTPDFTVPVMDAIVHLIAV.

The Nucleophile role is filled by Asp-10.

It belongs to the HAD-like hydrolase superfamily. S-2-haloalkanoic acid dehalogenase family.

It carries out the reaction a haloacetate + H2O = a halide anion + glycolate + H(+). The sequence is that of Haloacetate dehalogenase H-2 (dehH2) from Moraxella sp. (strain B).